The primary structure comprises 297 residues: Palmitoyl-protein thioesterase ABHD10, mitochondrial (297 aa).

The transit peptide at Met-1–Lys-43 directs the protein to the mitochondrion. Residues Ile-69–Pro-181 form the AB hydrolase-1 domain. Catalysis depends on charge relay system residues Ser-143, Asp-240, and His-270.

This sequence belongs to the AB hydrolase superfamily. As to expression, expressed in epididymal sperm but not in testicular sperm (at protein level).

The protein localises to the mitochondrion. It catalyses the reaction S-hexadecanoyl-L-cysteinyl-[protein] + H2O = L-cysteinyl-[protein] + hexadecanoate + H(+). It carries out the reaction mycophenolic acid O-acyl-beta-D-glucuronide + H2O = mycophenolate + D-glucuronate + H(+). Inhibited by palmostatin-B. Acts as an acyl-protein thioesterase that hydrolyzes fatty acids from acylated residues in proteins. Regulates the mitochondrial S-depalmitoylation of the nucleophilic active site residue of peroxiredoxin-5/PRDX5, a key antioxidant protein, therefore modulating mitochondrial antioxidant ability. Also catalyzes the deglucuronidation of mycophenolic acid acyl-glucuronide, an active metabolite of the immunosuppressant drug mycophenolate. The sequence is that of Palmitoyl-protein thioesterase ABHD10, mitochondrial from Rattus norvegicus (Rat).